The chain runs to 274 residues: Large ribosomal subunit protein uL2cz/uL2cy (274 aa).

2 disordered regions span residues 1-23 (MAIHLYKTSTPSTRNGTVGSQVK) and 223-274 (MNPV…RRSK). The segment covering 7-23 (KTSTPSTRNGTVGSQVK) has biased composition (polar residues).

The protein belongs to the universal ribosomal protein uL2 family. In terms of assembly, part of the 50S ribosomal subunit.

It localises to the plastid. The protein resides in the chloroplast. In Nandina domestica (Heavenly bamboo), this protein is Large ribosomal subunit protein uL2cz/uL2cy (rpl2-A).